We begin with the raw amino-acid sequence, 364 residues long: Probable dual-specificity RNA methyltransferase RlmN (364 aa).

E106 serves as the catalytic Proton acceptor. Positions 112-350 constitute a Radical SAM core domain; sequence YPQRNTVCIS…SCTVRDTRGR (239 aa). A disulfide bridge links C119 with C356. The [4Fe-4S] cluster site is built by C126, C130, and C133. S-adenosyl-L-methionine contacts are provided by residues 177-178, S211, 234-236, and N313; these read GE and SLH. The S-methylcysteine intermediate role is filled by C356.

This sequence belongs to the radical SAM superfamily. RlmN family. Requires [4Fe-4S] cluster as cofactor.

Its subcellular location is the cytoplasm. The catalysed reaction is adenosine(2503) in 23S rRNA + 2 reduced [2Fe-2S]-[ferredoxin] + 2 S-adenosyl-L-methionine = 2-methyladenosine(2503) in 23S rRNA + 5'-deoxyadenosine + L-methionine + 2 oxidized [2Fe-2S]-[ferredoxin] + S-adenosyl-L-homocysteine. The enzyme catalyses adenosine(37) in tRNA + 2 reduced [2Fe-2S]-[ferredoxin] + 2 S-adenosyl-L-methionine = 2-methyladenosine(37) in tRNA + 5'-deoxyadenosine + L-methionine + 2 oxidized [2Fe-2S]-[ferredoxin] + S-adenosyl-L-homocysteine. Functionally, specifically methylates position 2 of adenine 2503 in 23S rRNA and position 2 of adenine 37 in tRNAs. This chain is Probable dual-specificity RNA methyltransferase RlmN, found in Mycobacterium marinum (strain ATCC BAA-535 / M).